The primary structure comprises 563 residues: Rhodopsin kinase GRK1 (563 aa).

The segment at 1-15 is interaction with RCVRN; sequence MDFGSLETVVANSAF. Residues 1-189 form an N-terminal region; it reads MDFGSLETVV…LEAQPMGEDW (189 aa). S5 bears the Phosphoserine mark. A Phosphothreonine modification is found at T8. Residue S21 is modified to Phosphoserine; by PKA and autocatalysis. In terms of domain architecture, RGS spans 58–175; that stretch reads FESVCLEQPI…LGSLYFLRFL (118 aa). One can recognise a Protein kinase domain in the interval 190 to 455; the sequence is FLDFRVLGKG…CDKLRAHPLF (266 aa). ATP contacts are provided by residues 196 to 204 and K219; that span reads LGKGGFGEV. D317 acts as the Proton acceptor in catalysis. In terms of domain architecture, AGC-kinase C-terminal spans 456–521; the sequence is KDLNWRQLEA…GNCPIPWQEE (66 aa). Positions 456–563 are C-terminal; the sequence is KDLNWRQLEA…SSKSGMCLVS (108 aa). The residue at position 491 (S491) is a Phosphoserine; by autocatalysis. Residue T492 is modified to Phosphothreonine; by autocatalysis. Residues 539–563 are disordered; that stretch reads QMPDDMKGISGGSSSSSKSGMCLVS. Residues 550–563 show a composition bias toward low complexity; sequence GSSSSSKSGMCLVS. A Cysteine methyl ester modification is found at C560. A lipid anchor (S-farnesyl cysteine) is attached at C560. A propeptide spans 561-563 (removed in mature form); it reads LVS.

It belongs to the protein kinase superfamily. AGC Ser/Thr protein kinase family. GPRK subfamily. As to quaternary structure, interacts (via N-terminus) with RCVRN (via C-terminus); the interaction is Ca(2+)-dependent. Interacts (when prenylated) with PDE6D; this promotes release from membranes. May form a complex composed of RHO, GRK1 and RCVRN in a Ca(2+)-dependent manner; RCVRN prevents the interaction between GRK1 and RHO. Post-translationally, autophosphorylated, Ser-21 is a minor site of autophosphorylation compared to Ser-491 and Thr-492. Phosphorylation at Ser-21 is regulated by light and activated by cAMP. In terms of processing, farnesylation is required for full activity. Retinal-specific. Expressed in rods and cones cells.

The protein resides in the membrane. It is found in the cell projection. It localises to the cilium. Its subcellular location is the photoreceptor outer segment. The enzyme catalyses L-threonyl-[rhodopsin] + ATP = O-phospho-L-threonyl-[rhodopsin] + ADP + H(+). It carries out the reaction L-seryl-[rhodopsin] + ATP = O-phospho-L-seryl-[rhodopsin] + ADP + H(+). Its activity is regulated as follows. Inhibited by RCVRN, which prevents the interaction between GRK1 and RHO. Inhibition is calcium-dependent. Inhibited by phosphorylation of Ser-21. In terms of biological role, retina-specific kinase involved in the signal turnoff via phosphorylation of rhodopsin (RHO), the G protein- coupled receptor that initiates the phototransduction cascade. This rapid desensitization is essential for scotopic vision and permits rapid adaptation to changes in illumination. May play a role in the maintenance of the outer nuclear layer in the retina. In Homo sapiens (Human), this protein is Rhodopsin kinase GRK1.